Reading from the N-terminus, the 428-residue chain is MQLLTIGINHHTAPVALRERVAFPLEQIKPALETFKSIWLGPSARTAPEAAILSTCNRTELYCATDDQAAREAAIQWLSRYHNLPIDELAPHVYALPQSEAVRHAFRVASGLDSMVLGETQIVGQMKDAVRTASEAGALGTYLNQLFQRTFAVAKEVRSTTEIGAQSVSMAAAAVRLAQRIFDKVSNQRVLFIGAGEMIELCATHFAAQQPRELVVANRTAERGTRLAERFNGRAIPLSELPSRMHEFDIIVSCTASTLPIIGLGAVERAVKARRHRPIFMVDLAVPRDIEPEVGQLEDVFLYTVDDLGAIVREGNASRQAAVAQAEAIIETRVQNFMQWLDARSIVPVIRHMHTQADVLRRAEVERAQKMLARGDDPAAVLEALSQSLTNKLIHGPTHALNRASSENRDKLIELMSGFYKHSGSTER.

Substrate contacts are provided by residues 55–58 (TCNR), Ser-114, 119–121 (ETQ), and Gln-125. Catalysis depends on Cys-56, which acts as the Nucleophile. 194-199 (GAGEMI) contacts NADP(+).

The protein belongs to the glutamyl-tRNA reductase family. As to quaternary structure, homodimer.

It catalyses the reaction (S)-4-amino-5-oxopentanoate + tRNA(Glu) + NADP(+) = L-glutamyl-tRNA(Glu) + NADPH + H(+). It participates in porphyrin-containing compound metabolism; protoporphyrin-IX biosynthesis; 5-aminolevulinate from L-glutamyl-tRNA(Glu): step 1/2. In terms of biological role, catalyzes the NADPH-dependent reduction of glutamyl-tRNA(Glu) to glutamate 1-semialdehyde (GSA). The polypeptide is Glutamyl-tRNA reductase (Paraburkholderia phytofirmans (strain DSM 17436 / LMG 22146 / PsJN) (Burkholderia phytofirmans)).